A 61-amino-acid polypeptide reads, in one-letter code: Small ribosomal subunit protein uS14C (61 aa).

Residues C24, C27, C40, and C43 each coordinate Zn(2+).

Belongs to the universal ribosomal protein uS14 family. Zinc-binding uS14 subfamily. In terms of assembly, part of the 30S ribosomal subunit. Contacts proteins S3 and S10. Zn(2+) is required as a cofactor.

Its function is as follows. Binds 16S rRNA, required for the assembly of 30S particles and may also be responsible for determining the conformation of the 16S rRNA at the A site. The protein is Small ribosomal subunit protein uS14C of Enterococcus faecalis (strain ATCC 700802 / V583).